A 540-amino-acid chain; its full sequence is Synaptotagmin-3 (540 aa).

A helical membrane pass occupies residues 9–29; that stretch reads GIIGFVIGIPIGLILGFFVLI. An SMP-LTD domain is found at 67–249; it reads DYERVDWFNK…WPQVLEIPIL (183 aa). The tract at residues 227–509 is phospholipid binding; it reads QETIKRQVSS…ELGHVDINLD (283 aa). 2 consecutive C2 domains span residues 240–363 and 401–521; these read WPQV…EFNL and RKES…NQKY. 5 residues coordinate Ca(2+): Asp277, Asp283, Asp333, Asp335, and Asp341.

This sequence belongs to the synaptotagmin family. Requires Ca(2+) as cofactor.

The protein localises to the membrane. In terms of biological role, may be involved in membrane trafficking. The polypeptide is Synaptotagmin-3 (SYT3) (Arabidopsis thaliana (Mouse-ear cress)).